The primary structure comprises 216 residues: Large ribosomal subunit protein uL1 (216 aa).

Belongs to the universal ribosomal protein uL1 family. In terms of assembly, component of the large ribosomal subunit.

It is found in the cytoplasm. In terms of biological role, component of the large ribosomal subunit. The ribosome is a large ribonucleoprotein complex responsible for the synthesis of proteins in the cell. This is Large ribosomal subunit protein uL1 (rpl10a) from Ictalurus punctatus (Channel catfish).